Consider the following 893-residue polypeptide: DNA gyrase subunit A (893 aa).

One can recognise a Topo IIA-type catalytic domain in the interval 35–501 (LPDVRDGLKP…GLEDLEDEDL (467 aa)). Residue tyrosine 123 is the O-(5'-phospho-DNA)-tyrosine intermediate of the active site. The short motif at 528–534 (QNRGGRG) is the GyrA-box element. The tract at residues 810-893 (VNEEDDNEEN…ASDNEEDSDE (84 aa)) is disordered. Acidic residues-rich tracts occupy residues 812–821 (EEDDNEENAD) and 852–862 (DAEMESVESPE). Positions 863–879 (NDDRIDIRQDFMDRVNE) are enriched in basic and acidic residues. The span at 880-893 (DIESASDNEEDSDE) shows a compositional bias: acidic residues.

The protein belongs to the type II topoisomerase GyrA/ParC subunit family. Heterotetramer, composed of two GyrA and two GyrB chains. In the heterotetramer, GyrA contains the active site tyrosine that forms a transient covalent intermediate with DNA, while GyrB binds cofactors and catalyzes ATP hydrolysis.

Its subcellular location is the cytoplasm. It catalyses the reaction ATP-dependent breakage, passage and rejoining of double-stranded DNA.. A type II topoisomerase that negatively supercoils closed circular double-stranded (ds) DNA in an ATP-dependent manner to modulate DNA topology and maintain chromosomes in an underwound state. Negative supercoiling favors strand separation, and DNA replication, transcription, recombination and repair, all of which involve strand separation. Also able to catalyze the interconversion of other topological isomers of dsDNA rings, including catenanes and knotted rings. Type II topoisomerases break and join 2 DNA strands simultaneously in an ATP-dependent manner. In Staphylococcus epidermidis (strain ATCC 12228 / FDA PCI 1200), this protein is DNA gyrase subunit A.